Consider the following 181-residue polypeptide: Endoribonuclease YbeY (181 aa).

Zn(2+) is bound by residues His115, His119, and His125.

It belongs to the endoribonuclease YbeY family. Requires Zn(2+) as cofactor.

It localises to the cytoplasm. Its function is as follows. Single strand-specific metallo-endoribonuclease involved in late-stage 70S ribosome quality control and in maturation of the 3' terminus of the 16S rRNA. In Bifidobacterium animalis subsp. lactis (strain AD011), this protein is Endoribonuclease YbeY.